Here is a 205-residue protein sequence, read N- to C-terminus: Peptidyl-tRNA hydrolase (205 aa).

Position 18 (tyrosine 18) interacts with tRNA. Residue histidine 23 is the Proton acceptor of the active site. 3 residues coordinate tRNA: tyrosine 69, asparagine 71, and asparagine 117.

The protein belongs to the PTH family. Monomer.

It is found in the cytoplasm. The catalysed reaction is an N-acyl-L-alpha-aminoacyl-tRNA + H2O = an N-acyl-L-amino acid + a tRNA + H(+). In terms of biological role, hydrolyzes ribosome-free peptidyl-tRNAs (with 1 or more amino acids incorporated), which drop off the ribosome during protein synthesis, or as a result of ribosome stalling. Its function is as follows. Catalyzes the release of premature peptidyl moieties from peptidyl-tRNA molecules trapped in stalled 50S ribosomal subunits, and thus maintains levels of free tRNAs and 50S ribosomes. This Synechococcus sp. (strain CC9605) protein is Peptidyl-tRNA hydrolase.